Reading from the N-terminus, the 209-residue chain is Response regulator protein VraR (209 aa).

The 117-residue stretch at 4–120 (KVLFVDDHEM…DIADAVRKTS (117 aa)) folds into the Response regulatory domain. Aspartate 55 carries the post-translational modification 4-aspartylphosphate. One can recognise an HTH luxR-type domain in the interval 141-206 (RAELYEMLTE…QAVIYAFQHN (66 aa)). Positions 165 to 184 (NQEIASASHITIKTVKTHVS) form a DNA-binding region, H-T-H motif.

In terms of assembly, homodimer. Post-translationally, phosphorylated by VraS. Phosphorylation state of VraR controls dimerization of the protein.

Functionally, member of the two-component regulatory system VraS/VraR involved in the control of the cell wall peptidoglycan biosynthesis. Upon cellular stress, the histidine kinase VraS transfers the phosphoryl group onto VraR. Upon phosphorylation, VraR dimerizes at the N-terminal domain. In turn, phosphorylation-induced dimerization expand and enhance the VraR binding to its own promoter leading to increased expression and subsequent modulation of as many as 40 genes, which ultimately constitute the S.aureus response to cell wall damage. In addition, inhibits the host autophagic flux and delays the early stage of autophagosome formation, thereby promoting bacterial survival. Facilitates the ability of S.aureus to resist host polymorphonuclear leukocytes-mediated phagocytosis and killing thus contributing to immune evasion. This is Response regulator protein VraR (vraR) from Staphylococcus aureus (strain NCTC 8325 / PS 47).